The chain runs to 456 residues: Chromosomal replication initiator protein DnaA 1 (456 aa).

The domain I, interacts with DnaA modulators stretch occupies residues 1–68 (MRAWEEFLLL…KASLINNNGK (68 aa)). Residues 68-101 (KPIRVRVTSLDKSTPFKETQIQQEKTAYFTMKYG) form a domain II region. A domain III, AAA+ region region spans residues 102 to 320 (DIDPNMSFAN…HALTTLAKRV (219 aa)). ATP is bound by residues Ser150, Gly152, Lys153, and Thr154. Residues 321–456 (AYKKLSHQML…AYQSLDFIED (136 aa)) form a domain IV, binds dsDNA region.

The protein belongs to the DnaA family. Oligomerizes as a right-handed, spiral filament on DNA at oriC.

The protein localises to the cytoplasm. In terms of biological role, plays an essential role in the initiation and regulation of chromosomal replication. ATP-DnaA binds to the origin of replication (oriC) to initiate formation of the DNA replication initiation complex once per cell cycle. Binds the DnaA box (a 9 base pair repeat at the origin) and separates the double-stranded (ds)DNA. Forms a right-handed helical filament on oriC DNA; dsDNA binds to the exterior of the filament while single-stranded (ss)DNA is stabiized in the filament's interior. The ATP-DnaA-oriC complex binds and stabilizes one strand of the AT-rich DNA unwinding element (DUE), permitting loading of DNA polymerase. After initiation quickly degrades to an ADP-DnaA complex that is not apt for DNA replication. Binds acidic phospholipids. The polypeptide is Chromosomal replication initiator protein DnaA 1 (Chlamydia trachomatis serovar D (strain ATCC VR-885 / DSM 19411 / UW-3/Cx)).